Consider the following 324-residue polypeptide: Kelch domain-containing protein AF_2170 (324 aa).

Kelch repeat units follow at residues 229 to 276 (YIFA…VGGE) and 277 to 323 (YIYI…NNGK).

This Archaeoglobus fulgidus (strain ATCC 49558 / DSM 4304 / JCM 9628 / NBRC 100126 / VC-16) protein is Kelch domain-containing protein AF_2170.